The sequence spans 300 residues: Light-independent protochlorophyllide reductase iron-sulfur ATP-binding protein (300 aa).

Residues 10-15 and lysine 39 contribute to the ATP site; that span reads GIGKST. Residue serine 14 participates in Mg(2+) binding. 2 residues coordinate [4Fe-4S] cluster: cysteine 95 and cysteine 129. Residue 180 to 181 coordinates ATP; sequence NR.

This sequence belongs to the NifH/BchL/ChlL family. In terms of assembly, homodimer. Protochlorophyllide reductase is composed of three subunits; ChlL, ChlN and ChlB. [4Fe-4S] cluster is required as a cofactor.

The protein resides in the plastid. Its subcellular location is the chloroplast. It catalyses the reaction chlorophyllide a + oxidized 2[4Fe-4S]-[ferredoxin] + 2 ADP + 2 phosphate = protochlorophyllide a + reduced 2[4Fe-4S]-[ferredoxin] + 2 ATP + 2 H2O. The protein operates within porphyrin-containing compound metabolism; chlorophyll biosynthesis (light-independent). In terms of biological role, component of the dark-operative protochlorophyllide reductase (DPOR) that uses Mg-ATP and reduced ferredoxin to reduce ring D of protochlorophyllide (Pchlide) to form chlorophyllide a (Chlide). This reaction is light-independent. The L component serves as a unique electron donor to the NB-component of the complex, and binds Mg-ATP. The protein is Light-independent protochlorophyllide reductase iron-sulfur ATP-binding protein of Auxenochlorella protothecoides (Green microalga).